The following is a 322-amino-acid chain: Probable uridine nucleosidase 2 (322 aa).

Catalysis depends on residues Asp-14 and His-246.

Belongs to the IUNH family. As to quaternary structure, component of the NSH heterocomplex made of URH1/NSH1 and URH2/NSH2 which exhibits strong xanthosine nucleosidase activity. Interacts with URH1. Expressed in roots, seedlings and flowers.

It is found in the cytoplasm. Its subcellular location is the cytosol. The catalysed reaction is uridine + H2O = D-ribose + uracil. It catalyses the reaction inosine + H2O = hypoxanthine + D-ribose. It carries out the reaction xanthosine + H2O = D-ribose + xanthine. Its function is as follows. Involved in pyrimidine breakdown, especially in response to dark stress. In the presence of URH1, exhibits efficient inosine and xanthosine hydrolytic activities. Support inosine breakdown especially during the late phase of senescence. The polypeptide is Probable uridine nucleosidase 2 (Arabidopsis thaliana (Mouse-ear cress)).